A 591-amino-acid chain; its full sequence is NADH-quinone oxidoreductase subunit C/D (591 aa).

The segment at 1 to 182 is NADH dehydrogenase I subunit C; sequence MVTVVENTDP…TPYFLNTAKQ (182 aa). The tract at residues 206 to 591 is NADH dehydrogenase I subunit D; that stretch reads DFMFLNIGPN…IDIVMADCDR (386 aa).

The protein in the N-terminal section; belongs to the complex I 30 kDa subunit family. This sequence in the C-terminal section; belongs to the complex I 49 kDa subunit family. NDH-1 is composed of 13 different subunits. Subunits NuoB, CD, E, F, and G constitute the peripheral sector of the complex.

The protein resides in the cell inner membrane. It catalyses the reaction a quinone + NADH + 5 H(+)(in) = a quinol + NAD(+) + 4 H(+)(out). Functionally, NDH-1 shuttles electrons from NADH, via FMN and iron-sulfur (Fe-S) centers, to quinones in the respiratory chain. The immediate electron acceptor for the enzyme in this species is believed to be ubiquinone. Couples the redox reaction to proton translocation (for every two electrons transferred, four hydrogen ions are translocated across the cytoplasmic membrane), and thus conserves the redox energy in a proton gradient. The chain is NADH-quinone oxidoreductase subunit C/D from Psychrobacter cryohalolentis (strain ATCC BAA-1226 / DSM 17306 / VKM B-2378 / K5).